Here is a 71-residue protein sequence, read N- to C-terminus: Large ribosomal subunit protein eL38 (71 aa).

This sequence belongs to the eukaryotic ribosomal protein eL38 family.

In Ixodes scapularis (Black-legged tick), this protein is Large ribosomal subunit protein eL38 (RpL38).